Here is a 2541-residue protein sequence, read N- to C-terminus: Talin-1 (2541 aa).

The 318-residue stretch at 86-403 folds into the FERM domain; the sequence is RPLKIRMLDG…GYIDIILKKK (318 aa). At Thr167 the chain carries Phosphothreonine. Residues 280–435 form an interaction with LAYN region; it reads FQAHKNCGQM…PKKSTVLQQQ (156 aa). Phosphoserine occurs at positions 405, 425, 446, 620, and 729. Residues 482–655 are helical bundle R1; it reads RGHMPPLTSA…QASGELLQQI (174 aa). Residues 656–786 form a helical bundle R2 region; that stretch reads GESDTDPHFQ…ALNELLQHVK (131 aa). Residues 787-911 are helical bundle R3; it reads AHATGAGPAG…NAAAQNAIKK (125 aa). Positions 913–1044 are helical bundle R4; sequence LVQRLEHAAK…RTAAQKAQEA (132 aa). The residue at position 1021 (Ser1021) is a Phosphoserine. Residues 1046 to 1206 are helical bundle R5; that stretch reads GPLEMDSALS…NRCVSCLPGQ (161 aa). Tyr1116 carries the phosphotyrosine modification. Position 1142 is a phosphothreonine (Thr1142). Phosphoserine is present on residues Ser1201 and Ser1225. The segment at 1207–1357 is helical bundle R6; it reads RDVDNALRAV…QLITMCTQQA (151 aa). A Phosphothreonine modification is found at Thr1263. A Phosphoserine modification is found at Ser1323. Positions 1327–1948 are interaction with SYNM; the sequence is AAPNLKSQLA…CSPSDAYTKK (622 aa). The interval 1358 to 1453 is helical bundle R7A; sequence PGQKECDNAL…AYLVGVSDPN (96 aa). Positions 1359–1659 are interaction with VCL and F-actin; that stretch reads GQKECDNALR…SMRDKAPGQL (301 aa). Residues 1461-1580 form a helical bundle R8 region; the sequence is LVEPTQFARA…NLSAFASNPE (120 aa). Residue Lys1544 is modified to N6-acetyllysine. Residues 1581-1653 are helical bundle R7B; it reads FSSIPAQISP…IKKLITSMRD (73 aa). Residues 1655–1822 are helical bundle R9; the sequence is APGQLECETA…TLNEAASAAG (168 aa). Positions 1823 to 1973 are helical bundle R10; sequence VVGGMVDSIT…VLAALQAGNR (151 aa). Phosphoserine is present on Ser1849. Thr1855 carries the post-translational modification Phosphothreonine. Phosphoserine is present on Ser1878. The tract at residues 1974 to 2140 is helical bundle R11; it reads GTQACITAAS…TVKAVEDEAT (167 aa). Lys2031 is subject to N6-acetyllysine. Ser2040 is modified (phosphoserine). The residue at position 2115 (Lys2115) is an N6-acetyllysine. A helical bundle R12 region spans residues 2141–2294; sequence KGTRALEATT…QAAEAMKGTE (154 aa). The 241-residue stretch at 2293–2533 folds into the I/LWEQ domain; the sequence is TEWVDPEDPT…QIRQQQYKFL (241 aa). Residues 2300–2482 are helical bundle R13; it reads DPTVIAENEL…AAQKAAAFEE (183 aa).

As to quaternary structure, part of a complex composed of THSD1, PTK2/FAK1, TLN1 and VCL. Interacts with THSD1; this promotes interaction with PTK2/FAK1 and VCL. Binds with high affinity to VCL and with low affinity to integrins. Interacts with APBB1IP; this inhibits VCL binding. Interacts with PTK2/FAK1. Interacts with PIP5K1C and NRAP. Interacts with LAYN. Interacts with SYNM. Interacts with ITGB1; the interaction is prevented by competitive binding of ITGB1BP1. Interacts with SVEP1. Interacts (via R7 domain) with KANK1 or KANK2 (via KN motif); this interaction likely initiates the assembly of cortical microtubule stabilization complexes (CMSCs) at the vicinity of focal adhesions. Interacts with VCL; shows reduced VCL binding compared to isoform 2. Interacts with APBB1IP; shows similar level of binding compared to isoform 2. In terms of assembly, interacts with VCL; shows enhanced VCL binding compared to isoform 1. Interacts with APBB1IP; shows similar level of binding compared to isoform 1. As to quaternary structure, (Microbial infection) Interacts with human cytomegalovirus protein UL135. Expressed at low to non-detectable levels in many tissues but highly expressed in skin and pancreas with other tissues including kidney cortex, endocervix, testis, pituitary, liver, and spleen also showing robust expression.

Its subcellular location is the cell projection. The protein localises to the ruffle membrane. It is found in the cytoplasm. It localises to the cytoskeleton. The protein resides in the cell surface. Its subcellular location is the cell junction. The protein localises to the focal adhesion. Its function is as follows. High molecular weight cytoskeletal protein concentrated at regions of cell-matrix and cell-cell contacts. Involved in connections of major cytoskeletal structures to the plasma membrane. With KANK1 co-organize the assembly of cortical microtubule stabilizing complexes (CMSCs) positioned to control microtubule-actin crosstalk at focal adhesions (FAs) rims. The sequence is that of Talin-1 (TLN1) from Homo sapiens (Human).